Here is a 105-residue protein sequence, read N- to C-terminus: Large ribosomal subunit protein eL42 (105 aa).

Residues 23–61 (KVTQYKKGKESKFAQGRRRYDRKQSGFGGQTKPIFRKKA) are disordered.

The protein belongs to the eukaryotic ribosomal protein eL42 family.

This chain is Large ribosomal subunit protein eL42, found in Caenorhabditis elegans.